The sequence spans 257 residues: Capsid protein (257 aa).

The Bipartite nuclear localization signal signature appears at 3-20 (KRTGDILISTPVSKVRRK). Residues 40–54 (KRRSWTYRPMYRKPR) carry the Nuclear localization signal motif. Residues 68–85 (CEGPCKVQSYEQRDDVKH) fold into a zinc finger. A Nuclear export signal motif is present at residues 101-122 (ITHRVGKRFCIKSIYILGKIWM). The Bipartite nuclear localization signal motif lies at 201-248 (KRFFKVNTHVVYNHQEQAKYENHTENALLLYMACTHASNPVYATLKIR).

The protein belongs to the geminiviridae capsid protein family. In terms of assembly, homomultimer. Binds to single-stranded and double-stranded viral DNA. Interacts (via nuclear localization signals) with host importin alpha-1a.

It localises to the virion. The protein resides in the host nucleus. Functionally, encapsidates the viral genome into characteristic twinned ('geminate') particles. Binds the genomic viral ssDNA and shuttles it into and out of the cell nucleus. Plays a role in protection of the genome from degradation, virus acquisition and transmission by insect vectors, infectivity, and systemic movement. The CP of monopartite geminiviruses is absolutely essential for virus movement. The polypeptide is Capsid protein (Tomato yellow leaf curl Sardinia virus (isolate Spain-1) (TYLCSV)).